The following is a 346-amino-acid chain: D-alanine--D-alanine ligase (346 aa).

The ATP-grasp domain occupies 133–327; sequence KLYAKSVGVK…ALADQISLEK (195 aa). 159–211 contributes to the ATP binding site; sequence LSFPCIIKPARLGSSIGISIVKDEKDLEYAKDVGFEFDNDLVVEEFKNNIKEY. The Mg(2+) site is built by aspartate 284, glutamate 296, and asparagine 298.

It belongs to the D-alanine--D-alanine ligase family. Mg(2+) serves as cofactor. The cofactor is Mn(2+).

It localises to the cytoplasm. It carries out the reaction 2 D-alanine + ATP = D-alanyl-D-alanine + ADP + phosphate + H(+). The protein operates within cell wall biogenesis; peptidoglycan biosynthesis. In terms of biological role, cell wall formation. The protein is D-alanine--D-alanine ligase of Campylobacter jejuni subsp. jejuni serotype O:6 (strain 81116 / NCTC 11828).